The sequence spans 88 residues: Apolipoprotein C-I (88 aa).

The N-terminal stretch at 1–26 (MRLFIALPVLIVVVAMALEGPAPAQA) is a signal peptide.

This sequence belongs to the apolipoprotein C1 family.

It localises to the secreted. In terms of biological role, inhibitor of lipoprotein binding to the low density lipoprotein (LDL) receptor, LDL receptor-related protein, and very low density lipoprotein (VLDL) receptor. Associates with high density lipoproteins (HDL) and the triacylglycerol-rich lipoproteins in the plasma and makes up about 10% of the protein of the VLDL and 2% of that of HDL. Appears to interfere directly with fatty acid uptake and is also the major plasma inhibitor of cholesteryl ester transfer protein (CETP). Modulates the interaction of APOE with beta-migrating VLDL and inhibits binding of beta-VLDL to the LDL receptor-related protein. Binds free fatty acids and reduces their intracellular esterification. This chain is Apolipoprotein C-I (Apoc1), found in Grammomys surdaster (African woodland thicket rat).